The following is a 294-amino-acid chain: UDP-3-O-acyl-N-acetylglucosamine deacetylase (294 aa).

3 residues coordinate Zn(2+): His-75, His-232, and Asp-236. Catalysis depends on His-259, which acts as the Proton donor.

The protein belongs to the LpxC family. The cofactor is Zn(2+).

It catalyses the reaction a UDP-3-O-[(3R)-3-hydroxyacyl]-N-acetyl-alpha-D-glucosamine + H2O = a UDP-3-O-[(3R)-3-hydroxyacyl]-alpha-D-glucosamine + acetate. It participates in glycolipid biosynthesis; lipid IV(A) biosynthesis; lipid IV(A) from (3R)-3-hydroxytetradecanoyl-[acyl-carrier-protein] and UDP-N-acetyl-alpha-D-glucosamine: step 2/6. In terms of biological role, catalyzes the hydrolysis of UDP-3-O-myristoyl-N-acetylglucosamine to form UDP-3-O-myristoylglucosamine and acetate, the committed step in lipid A biosynthesis. The sequence is that of UDP-3-O-acyl-N-acetylglucosamine deacetylase from Campylobacter jejuni subsp. doylei (strain ATCC BAA-1458 / RM4099 / 269.97).